The sequence spans 154 residues: Pro-corazonin (154 aa).

Residues 1–19 form the signal peptide; sequence MLRLLLLPLFLFTLSMCMG. The residue at position 20 (Gln-20) is a Pyrrolidone carboxylic acid. Position 30 is an asparagine amide (Asn-30). Residues 70–154 constitute a propeptide that is removed on maturation; the sequence is LERCLSQLQR…SAEPNVFGKH (85 aa). Positions 91 to 119 are disordered; it reads DFNANRVDPDPENSAHPRLSNSNGENVLY. Residues 109–119 are compositionally biased toward polar residues; sequence LSNSNGENVLY.

Belongs to the corazonin family. From late embryo to larva, expression is consistently detected in three neuronal groups: dorso-lateral neurons (DL), dorso-medial neurons (DM), and neurons in the ventral nerve cord (vCrz). Both the vCrz and DM groups die via programmed cell death during metamorphosis, whereas the DL neurons persist to adulthood. In adults, expression is seen in a cluster of six to eight neurons per lobe in the pars lateralis (DLP), in numerous neuronal cells in the optic lobes, and in a novel group of four abdominal ganglionic neurons present only in males (ms-aCrz). Projections of the ms-aCrz neurons terminate within the ventral nerve cord, implying a role as interneurons. Terminals of the DLP neurons are found in the retrocerebral complex that produces juvenile hormone and adipokinetic hormone, located in the vicinity of terminals emanating from PDF-containing pacemaking neurons.

The protein resides in the secreted. Its function is as follows. Cardioactive peptide. Corazonin is probably involved in the physiological regulation of the heart beat. Clock (Clk) and cycle (cyc) proteins negatively regulate Crz transcription in a cell-specific manner. The polypeptide is Pro-corazonin (Crz) (Drosophila melanogaster (Fruit fly)).